Consider the following 367-residue polypeptide: Ganglioside-induced differentiation-associated protein 1-like 1 (367 aa).

The GST N-terminal domain occupies 45-126; it reads ESLVLYHWTQ…YVERTFTGEH (82 aa). In terms of domain architecture, GST C-terminal spans 174-341; that stretch reads PKYATAEIRR…RLVKRKPPSF (168 aa).

Belongs to the GST superfamily.

This Homo sapiens (Human) protein is Ganglioside-induced differentiation-associated protein 1-like 1 (GDAP1L1).